A 208-amino-acid polypeptide reads, in one-letter code: Ribosomal RNA small subunit methyltransferase G (208 aa).

Residues G75, L80, 126–127 (VE), and R141 each bind S-adenosyl-L-methionine.

It belongs to the methyltransferase superfamily. RNA methyltransferase RsmG family.

The protein resides in the cytoplasm. It catalyses the reaction guanosine(527) in 16S rRNA + S-adenosyl-L-methionine = N(7)-methylguanosine(527) in 16S rRNA + S-adenosyl-L-homocysteine. Its function is as follows. Specifically methylates the N7 position of guanine in position 527 of 16S rRNA. The chain is Ribosomal RNA small subunit methyltransferase G from Marinomonas sp. (strain MWYL1).